The following is a 348-amino-acid chain: MKLLGLLISAFGAINALKIKALYLSCDYELRPYNAVIDSQCMAFALNGSNIHEAIRYLNAMNIDKAYVLYWNDHDLHQNPMVLHKNGALAPFDRYTNTAKHVLCVEACSCPGPQSRPVVCPENNGASVSSPCPPCGQGNNTTVCDKVVVNPQPVKPLPAPCTPCAPCESSSSEKSESKECMTFPRICKKKCGPRHGRSPKKVEIVKSQKTYTFDIERYKRRGDVVVRVCSQDCKDKFEKFVLTKTGEIRKGKDKKCIPEPLPECLQCPKNLYKLKSGIEAKVCSEVCMYINSKCEIFVLIGDCDFYKVVMNERRRKQSSFHLKKIRGQKLRELIRQGLFGVEFSPLKC.

Positions 1 to 16 are cleaved as a signal peptide; it reads MKLLGLLISAFGAINA. Asn-47, Asn-139, and Asn-140 each carry an N-linked (GlcNAc...) asparagine glycan. The HBM1 motif lies at 193 to 198; the sequence is PRHGRS. The HBM2 signature appears at 248–256; it reads IRKGKDKKC. An HBM3 motif is present at residues 322–327; that stretch reads LKKIRG.

It is found in the spore wall. The protein resides in the spore. The protein localises to the perispore. In terms of biological role, spore wall protein involved in the adhesion to host cells surface glycoaminoglycans (GAGs). Microsporidian spore adherence is an integral part of activation and host cell infection. In Encephalitozoon intestinalis (Microsporidian parasite), this protein is Spore wall and anchoring disk complex protein EnP1 (EnP1).